We begin with the raw amino-acid sequence, 393 residues long: Cholinephosphotransferase 1 (393 aa).

Residues 1 to 40 are Lumenal-facing; the sequence is MGFFIPQSSLGNLKLYKYQSDDRSFLSNHVLRPFWRKFAT. A helical membrane pass occupies residues 41-61; that stretch reads IFPLWMAPNLVTLLGFCFIIF. Residues 62–172 are Cytoplasmic-facing; the sequence is NVLTTLYYDP…YHTHKLYLAE (111 aa). Residues 173 to 193 form a helical membrane-spanning segment; the sequence is FCGPVEGIIVLCISFIAVGIY. At 194–210 the chain is on the lumenal side; the sequence is GPQTIWHTKVAQFSWQD. Residues 211 to 231 traverse the membrane as a helical segment; sequence FVFDVETVHLMYAFCTGALIF. Over 232–263 the chain is Cytoplasmic; that stretch reads NIVTAHTNVVRYYESQSTKSATPSKTAENISK. The helical transmembrane segment at 264-284 threads the bilayer; sequence AVNGLLPFFAYFSSIFTLVLI. A topological domain (lumenal) is located at residue Gln285. Residues 286 to 306 form a helical membrane-spanning segment; sequence PSFISLALILSIGFSVAFVVG. The Cytoplasmic segment spans residues 307–320; it reads RMIIAHLTMQPFPM. A helical membrane pass occupies residues 321–341; it reads VNFPFLIPTIQLVLYAFMVYV. The Lumenal segment spans residues 342-348; it reads LDYQKGS. Residues 349-369 form a helical membrane-spanning segment; that stretch reads IVSALVWMGLGLTLAIHGMFI. Residues 370-393 are Cytoplasmic-facing; the sequence is NDIIYDITTFLDIYALSIKHPKEI.

The protein belongs to the CDP-alcohol phosphatidyltransferase class-I family. Mg(2+) is required as a cofactor.

It localises to the microsome membrane. It is found in the endoplasmic reticulum membrane. Its subcellular location is the mitochondrion outer membrane. It carries out the reaction CDP-choline + a 1,2-diacyl-sn-glycerol = a 1,2-diacyl-sn-glycero-3-phosphocholine + CMP + H(+). The enzyme catalyses CDP-N,N-dimethylethanolamine + a 1,2-diacyl-sn-glycerol = a 1,2-diacyl-sn-glycero-3-phospho-N,N-dimethylethanolamine + CMP + H(+). Its pathway is phospholipid metabolism; phosphatidylcholine biosynthesis; phosphatidylcholine from phosphocholine: step 2/2. Its activity is regulated as follows. Requires a divalent cation activator, and is inhibited by CMP. Activated by phospholipids, especially phosphatidylcholine. Functionally, catalyzes the final step in the CDP-choline route leading to phosphatidylcholin (PC). Preferentially uses CDP-monomethylethanolamine as aminoalcohol substrate. Shows highest activity toward di- and mono-unsaturated diacylglycerol species as lipid substrates. The CDP-choline pathway only contributes to net PC synthesis if exogenous choline is present. In its absence, this pathway recycles choline from PC turnover and may contribute to maintaining the proper PC species composition. This is Cholinephosphotransferase 1 (CPT1) from Saccharomyces cerevisiae (strain ATCC 204508 / S288c) (Baker's yeast).